The following is a 423-amino-acid chain: Hypoxia responsive morphology factor B (423 aa).

The Bipartite nuclear localization signal motif lies at 46 to 69 (KRSKTRRPKKEYKLQYENTKAHRV). Residues 157 to 187 (TQNCWAYRAAYLNAVHTIFSEQICSAMEVSP) form an RNA recognition motif (RRM)-like domain region. Over residues 243–257 (LSPQSGRGPEPSTQI) the composition is skewed to polar residues. The segment at 243-273 (LSPQSGRGPEPSTQIAEPGRHDSQSEQSTIS) is disordered.

Belongs to the hrmA family.

Its subcellular location is the nucleus. Its function is as follows. Probably modulates the generation of the hypoxia-typic morphotype (called H-MORPH) with altered biofilm architecture that leads to increased host inflammation, rapid disease progression, and mortality in a murine model of invasive aspergillosis. The chain is Hypoxia responsive morphology factor B from Aspergillus fumigatus (strain CBS 144.89 / FGSC A1163 / CEA10) (Neosartorya fumigata).